We begin with the raw amino-acid sequence, 376 residues long: Putative glutamate--cysteine ligase 2-1 (376 aa).

The protein belongs to the glutamate--cysteine ligase type 2 family. YbdK subfamily.

It catalyses the reaction L-cysteine + L-glutamate + ATP = gamma-L-glutamyl-L-cysteine + ADP + phosphate + H(+). ATP-dependent carboxylate-amine ligase which exhibits weak glutamate--cysteine ligase activity. The protein is Putative glutamate--cysteine ligase 2-1 of Mycobacterium sp. (strain KMS).